We begin with the raw amino-acid sequence, 448 residues long: Putative carbonic anhydrase 2 (448 aa).

The region spanning 1–222 (AYRQTENLLY…PAERDVFRII (222 aa)) is the Alpha-carbonic anhydrase domain. Residue histidine 19 coordinates Zn(2+). Residues asparagine 139 and asparagine 198 are each glycosylated (N-linked (GlcNAc...) asparagine). Residues 229 to 448 (RREEDDERGD…DKGDDKGDDN (220 aa)) form a disordered region. Positions 245–280 (DDDDNYDDDDYYNDDYSNDDYYDDDYYYDDYDDDTD) are enriched in acidic residues. 2 stretches are compositionally biased toward basic and acidic residues: residues 281–334 (DDHK…DDSG) and 342–354 (RDGRGNGDSRDRN). Asparagine 314 is a glycosylation site (N-linked (GlcNAc...) asparagine). Positions 357–368 (NGNGRENGGVRG) are enriched in gly residues. Residues 370–379 (GNDRDGRRDN) are compositionally biased toward basic and acidic residues. N-linked (GlcNAc...) asparagine glycosylation occurs at asparagine 385. The segment covering 386 to 421 (GTRRGNGDDRGGRRNEDRGENRRGKDDQERESEDGR) has biased composition (basic and acidic residues). Residues 422–435 (RRRRRFNGRRRRRG) show a composition bias toward basic residues. Residues 436 to 448 (RGDDKGDDKGDDN) show a composition bias toward basic and acidic residues.

It belongs to the alpha-carbonic anhydrase family. As to expression, component of the acid-insoluble and acid-soluble organic matrix of calcified layers of the shell (at protein level).

Its subcellular location is the secreted. The enzyme catalyses hydrogencarbonate + H(+) = CO2 + H2O. Functionally, reversible hydration of carbon dioxide. The sequence is that of Putative carbonic anhydrase 2 from Lottia gigantea (Giant owl limpet).